The primary structure comprises 120 residues: Large ribosomal subunit protein uL18 (120 aa).

It belongs to the universal ribosomal protein uL18 family. As to quaternary structure, part of the 50S ribosomal subunit; part of the 5S rRNA/L5/L18/L25 subcomplex. Contacts the 5S and 23S rRNAs.

Functionally, this is one of the proteins that bind and probably mediate the attachment of the 5S RNA into the large ribosomal subunit, where it forms part of the central protuberance. The protein is Large ribosomal subunit protein uL18 of Halalkalibacterium halodurans (strain ATCC BAA-125 / DSM 18197 / FERM 7344 / JCM 9153 / C-125) (Bacillus halodurans).